The following is a 190-amino-acid chain: Peptidyl-tRNA hydrolase (190 aa).

Position 14 (Tyr14) interacts with tRNA. His19 acts as the Proton acceptor in catalysis. TRNA is bound by residues Tyr64, Asn66, and Asn112.

Belongs to the PTH family. In terms of assembly, monomer.

It is found in the cytoplasm. It carries out the reaction an N-acyl-L-alpha-aminoacyl-tRNA + H2O = an N-acyl-L-amino acid + a tRNA + H(+). In terms of biological role, hydrolyzes ribosome-free peptidyl-tRNAs (with 1 or more amino acids incorporated), which drop off the ribosome during protein synthesis, or as a result of ribosome stalling. Catalyzes the release of premature peptidyl moieties from peptidyl-tRNA molecules trapped in stalled 50S ribosomal subunits, and thus maintains levels of free tRNAs and 50S ribosomes. This is Peptidyl-tRNA hydrolase from Chlorobium chlorochromatii (strain CaD3).